We begin with the raw amino-acid sequence, 255 residues long: tRNA (guanine-N(1)-)-methyltransferase (255 aa).

Residues G113 and 133–138 (IGDYVL) contribute to the S-adenosyl-L-methionine site.

The protein belongs to the RNA methyltransferase TrmD family. In terms of assembly, homodimer.

The protein localises to the cytoplasm. It catalyses the reaction guanosine(37) in tRNA + S-adenosyl-L-methionine = N(1)-methylguanosine(37) in tRNA + S-adenosyl-L-homocysteine + H(+). In terms of biological role, specifically methylates guanosine-37 in various tRNAs. This Escherichia fergusonii (strain ATCC 35469 / DSM 13698 / CCUG 18766 / IAM 14443 / JCM 21226 / LMG 7866 / NBRC 102419 / NCTC 12128 / CDC 0568-73) protein is tRNA (guanine-N(1)-)-methyltransferase.